Reading from the N-terminus, the 109-residue chain is Spermidine export protein MdtI (109 aa).

4 helical membrane passes run 6–26, 36–56, 64–84, and 88–108; these read WIHG…NVLL, CYGI…SQAV, AYAL…WVLF, and LNPK…MIKF.

It belongs to the drug/metabolite transporter (DMT) superfamily. Small multidrug resistance (SMR) (TC 2.A.7.1) family. MdtI subfamily. Forms a complex with MdtJ.

The protein resides in the cell inner membrane. In terms of biological role, catalyzes the excretion of spermidine. The chain is Spermidine export protein MdtI from Salmonella paratyphi A (strain ATCC 9150 / SARB42).